Here is a 279-residue protein sequence, read N- to C-terminus: Rhamnulose-1-phosphate aldolase (279 aa).

The active site involves glutamate 115. 3 residues coordinate Zn(2+): histidine 138, histidine 140, and histidine 209.

It belongs to the aldolase class II family. RhaD subfamily. Requires Zn(2+) as cofactor.

It localises to the cytoplasm. It catalyses the reaction L-rhamnulose 1-phosphate = (S)-lactaldehyde + dihydroxyacetone phosphate. The protein operates within carbohydrate degradation; L-rhamnose degradation; glycerone phosphate from L-rhamnose: step 3/3. Catalyzes the reversible cleavage of L-rhamnulose-1-phosphate to dihydroxyacetone phosphate (DHAP) and L-lactaldehyde. The chain is Rhamnulose-1-phosphate aldolase from Enterococcus faecalis (strain ATCC 700802 / V583).